The sequence spans 394 residues: Actin-related protein 2-A (394 aa).

ATP is bound by residues Gly-160 to Gly-162, Arg-214 to Glu-218, and Gly-305 to Tyr-310.

This sequence belongs to the actin family. ARP2 subfamily. Component of the Arp2/3 complex composed of actr2/arp2, actr3/arp3, arpc1b, arpc2, arpc3, arpc4 and arpc5.

The protein localises to the cytoplasm. Its subcellular location is the cytoskeleton. It is found in the cell projection. It localises to the nucleus. In terms of biological role, ATP-binding component of the Arp2/3 complex, a multiprotein complex that mediates actin polymerization upon stimulation by nucleation-promoting factor (NPF). The Arp2/3 complex mediates the formation of branched actin networks in the cytoplasm, providing the force for cell motility. Seems to contact the pointed end of the daughter actin filament. In addition to its role in the cytoplasmic cytoskeleton, the Arp2/3 complex also promotes actin polymerization in the nucleus, thereby regulating gene transcription and repair of damaged DNA. The Arp2/3 complex promotes homologous recombination (HR) repair in response to DNA damage by promoting nuclear actin polymerization, leading to drive motility of double-strand breaks (DSBs). This Danio rerio (Zebrafish) protein is Actin-related protein 2-A (actr2a).